The following is a 235-amino-acid chain: Cytidylate kinase (235 aa).

Residue 11–19 participates in ATP binding; that stretch reads GPSGVGKST.

It belongs to the cytidylate kinase family. Type 1 subfamily.

Its subcellular location is the cytoplasm. The enzyme catalyses CMP + ATP = CDP + ADP. It carries out the reaction dCMP + ATP = dCDP + ADP. This Syntrophotalea carbinolica (strain DSM 2380 / NBRC 103641 / GraBd1) (Pelobacter carbinolicus) protein is Cytidylate kinase.